Here is a 313-residue protein sequence, read N- to C-terminus: Olfactory receptor 6E1 (313 aa).

Asn-3 carries N-linked (GlcNAc...) asparagine glycosylation. Helical transmembrane passes span 25–45, 64–84, 96–116, 142–162, 192–212, 238–258, and 271–291; these read IFLGFLLTYFLILLGNFLIIF, FAMLEIWFTSVIFPKMLTNII, FLQAFLYFFLGTTEFFLLAVM, LVFCSWMSGLLLIIVPSSIVF, LVEFLGFVIANFSLLGTLAVT, TCSSHIIVVSLFYGSCIFMYV, and KVVALLNTVVTPTLNPFIYTL. Cysteines 95 and 177 form a disulfide.

Belongs to the G-protein coupled receptor 1 family.

It localises to the cell membrane. In terms of biological role, odorant receptor. Activated by (-)-citronellal and to a lesser extent by (+)-citronellal. Not activated by carvone or limonene. The polypeptide is Olfactory receptor 6E1 (Mus musculus (Mouse)).